The following is a 367-amino-acid chain: Methylthioribose-1-phosphate isomerase (367 aa).

D250 serves as the catalytic Proton donor.

The protein belongs to the eIF-2B alpha/beta/delta subunits family. MtnA subfamily.

It localises to the cytoplasm. The protein resides in the nucleus. It catalyses the reaction 5-(methylsulfanyl)-alpha-D-ribose 1-phosphate = 5-(methylsulfanyl)-D-ribulose 1-phosphate. Its pathway is amino-acid biosynthesis; L-methionine biosynthesis via salvage pathway; L-methionine from S-methyl-5-thio-alpha-D-ribose 1-phosphate: step 1/6. Functionally, catalyzes the interconversion of methylthioribose-1-phosphate (MTR-1-P) into methylthioribulose-1-phosphate (MTRu-1-P). The polypeptide is Methylthioribose-1-phosphate isomerase (IDI2) (Zea mays (Maize)).